Reading from the N-terminus, the 41-residue chain is Ranatuerin-2PLg (41 aa).

Positions 1 to 11 are excised as a propeptide; it reads DDGVEMTEEEV. A disulfide bridge connects residues cysteine 36 and cysteine 41.

This sequence belongs to the frog skin active peptide (FSAP) family. Ranatuerin subfamily.

The protein localises to the secreted. Its function is as follows. Antimicrobial peptide. In Lithobates palustris (Pickerel frog), this protein is Ranatuerin-2PLg.